A 499-amino-acid chain; its full sequence is Lysine--tRNA ligase (499 aa).

2 residues coordinate Mg(2+): glutamate 410 and glutamate 417.

This sequence belongs to the class-II aminoacyl-tRNA synthetase family. As to quaternary structure, homodimer. Requires Mg(2+) as cofactor.

It localises to the cytoplasm. The catalysed reaction is tRNA(Lys) + L-lysine + ATP = L-lysyl-tRNA(Lys) + AMP + diphosphate. In Bacillus subtilis (strain 168), this protein is Lysine--tRNA ligase (lysS).